Reading from the N-terminus, the 409-residue chain is Argininosuccinate synthase (409 aa).

Residue 10-18 (AYSGGLDTS) participates in ATP binding. Tyr-87 provides a ligand contact to L-citrulline. Gly-117 contributes to the ATP binding site. 3 residues coordinate L-aspartate: Thr-119, Asn-123, and Asp-124. Asn-123 provides a ligand contact to L-citrulline. The L-citrulline site is built by Arg-127, Ser-175, Ser-184, Glu-260, and Tyr-272.

The protein belongs to the argininosuccinate synthase family. Type 1 subfamily. In terms of assembly, homotetramer.

The protein localises to the cytoplasm. It catalyses the reaction L-citrulline + L-aspartate + ATP = 2-(N(omega)-L-arginino)succinate + AMP + diphosphate + H(+). It participates in amino-acid biosynthesis; L-arginine biosynthesis; L-arginine from L-ornithine and carbamoyl phosphate: step 2/3. The chain is Argininosuccinate synthase from Rubrobacter xylanophilus (strain DSM 9941 / JCM 11954 / NBRC 16129 / PRD-1).